Consider the following 189-residue polypeptide: MLRRFSLFSLGFLGWLLVSGNASASFSSTLSEGYHTLSNNVAQTWNEPEHYDLYVPAITWHARFAYDKEKTDKYNERPWGAGFGVSRWDEKGNWHGLYLMAFKDSFNKWEPIGGYGWEKTWRPLTDQNFHLGLGYTLGVTARDNWNYIPIPVILPLASIGYGPATFQMTYIPGTYNNGNVYFAWARFQF.

Residues 1–24 (MLRRFSLFSLGFLGWLLVSGNASA) form the signal peptide. Residues H61, D104, and S105 contribute to the active site.

It belongs to the lipid A palmitoyltransferase family. In terms of assembly, homodimer.

Its subcellular location is the cell outer membrane. The catalysed reaction is a lipid A + a 1,2-diacyl-sn-glycero-3-phosphocholine = a hepta-acyl lipid A + a 2-acyl-sn-glycero-3-phosphocholine. The enzyme catalyses a lipid IVA + a 1,2-diacyl-sn-glycero-3-phosphocholine = a lipid IVB + a 2-acyl-sn-glycero-3-phosphocholine. It catalyses the reaction a lipid IIA + a 1,2-diacyl-sn-glycero-3-phosphocholine = a lipid IIB + a 2-acyl-sn-glycero-3-phosphocholine. Transfers a fatty acid residue from the sn-1 position of a phospholipid to the N-linked hydroxyfatty acid chain on the proximal unit of lipid A or its precursors. This Klebsiella pneumoniae subsp. pneumoniae (strain ATCC 700721 / MGH 78578) protein is Lipid A acyltransferase PagP.